Reading from the N-terminus, the 275-residue chain is MAIHLYKTSTPSTRNGAVDSQVKSNPRNNLIYGQHHCGKGRNARGIITAGHRGGGHKRLYRKIDFRRNEKDISGRIVTIEYDPNRNAYICLIHYGDGEKRYILHPRGAIIGDTIVSGTEVPISMGNALPLSATDMPLGTAIHNIEITLGKGGQLARAAGAVAKLIAKEGKSATLRLPSGEVRLISKNCSATVGQVGNVGVNQKSLGRAGSKCWLGKRPVVRGVVMNPVDHPHGGGEGRSPIGRKKPTTPWGYPALGRRSRKRNKYSDSLILRRRK.

Disordered stretches follow at residues 1 to 22 (MAIH…DSQV) and 226 to 275 (NPVD…RRRK).

Belongs to the universal ribosomal protein uL2 family. As to quaternary structure, part of the 50S ribosomal subunit.

It localises to the plastid. The protein resides in the chloroplast. This Chloranthus spicatus (Chulantree) protein is Large ribosomal subunit protein uL2cz (rpl2-A).